The primary structure comprises 231 residues: Ribose-5-phosphate isomerase A (231 aa).

Substrate-binding positions include 28–31 (TGST), 83–86 (DGAD), and 96–99 (KGGG). Glu-105 functions as the Proton acceptor in the catalytic mechanism. Lys-123 is a binding site for substrate.

This sequence belongs to the ribose 5-phosphate isomerase family. Homodimer.

The enzyme catalyses aldehydo-D-ribose 5-phosphate = D-ribulose 5-phosphate. It functions in the pathway carbohydrate degradation; pentose phosphate pathway; D-ribose 5-phosphate from D-ribulose 5-phosphate (non-oxidative stage): step 1/1. Functionally, catalyzes the reversible conversion of ribose-5-phosphate to ribulose 5-phosphate. This is Ribose-5-phosphate isomerase A from Agrobacterium fabrum (strain C58 / ATCC 33970) (Agrobacterium tumefaciens (strain C58)).